We begin with the raw amino-acid sequence, 213 residues long: Pyridoxine/pyridoxamine 5'-phosphate oxidase (213 aa).

FMN is bound by residues 60–65, 75–76, Lys82, and Gln104; these read RMVLMK and YS. Lys65 is a substrate binding site. Substrate-binding residues include Tyr122 and Arg126. FMN-binding positions include 139-140 and Trp184; that span reads QS. 190 to 192 contacts substrate; the sequence is RLH. Arg194 serves as a coordination point for FMN.

This sequence belongs to the pyridoxamine 5'-phosphate oxidase family. Homodimer. The cofactor is FMN.

The enzyme catalyses pyridoxamine 5'-phosphate + O2 + H2O = pyridoxal 5'-phosphate + H2O2 + NH4(+). The catalysed reaction is pyridoxine 5'-phosphate + O2 = pyridoxal 5'-phosphate + H2O2. It functions in the pathway cofactor metabolism; pyridoxal 5'-phosphate salvage; pyridoxal 5'-phosphate from pyridoxamine 5'-phosphate: step 1/1. It participates in cofactor metabolism; pyridoxal 5'-phosphate salvage; pyridoxal 5'-phosphate from pyridoxine 5'-phosphate: step 1/1. In terms of biological role, catalyzes the oxidation of either pyridoxine 5'-phosphate (PNP) or pyridoxamine 5'-phosphate (PMP) into pyridoxal 5'-phosphate (PLP). This Bradyrhizobium diazoefficiens (strain JCM 10833 / BCRC 13528 / IAM 13628 / NBRC 14792 / USDA 110) protein is Pyridoxine/pyridoxamine 5'-phosphate oxidase.